A 334-amino-acid chain; its full sequence is S-adenosylmethionine decarboxylase proenzyme 2 (334 aa).

Substrate is bound at residue phenylalanine 7. Active-site residues include glutamate 8 and glutamate 11. Position 67 (glutamate 67) interacts with substrate. The active-site Schiff-base intermediate with substrate; via pyruvic acid is serine 68. The residue at position 68 (serine 68) is a Pyruvic acid (Ser); by autocatalysis. Cysteine 82 acts as the Proton donor; for catalytic activity in catalysis. Residue phenylalanine 223 participates in substrate binding. Residues serine 229 and histidine 243 each act as proton acceptor; for processing activity in the active site. Glutamate 247 is a binding site for substrate. Phosphoserine is present on serine 298.

This sequence belongs to the eukaryotic AdoMetDC family. As to quaternary structure, heterotetramer of two alpha and two beta chains. Requires pyruvate as cofactor. In terms of processing, is synthesized initially as an inactive proenzyme. Formation of the active enzyme involves a self-maturation process in which the active site pyruvoyl group is generated from an internal serine residue via an autocatalytic post-translational modification. Two non-identical subunits are generated from the proenzyme in this reaction, and the pyruvate is formed at the N-terminus of the alpha chain, which is derived from the carboxyl end of the proenzyme. The post-translation cleavage follows an unusual pathway, termed non-hydrolytic serinolysis, in which the side chain hydroxyl group of the serine supplies its oxygen atom to form the C-terminus of the beta chain, while the remainder of the serine residue undergoes an oxidative deamination to produce ammonia and the pyruvoyl group blocking the N-terminus of the alpha chain.

It catalyses the reaction S-adenosyl-L-methionine + H(+) = S-adenosyl 3-(methylsulfanyl)propylamine + CO2. It participates in amine and polyamine biosynthesis; S-adenosylmethioninamine biosynthesis; S-adenosylmethioninamine from S-adenosyl-L-methionine: step 1/1. Its function is as follows. Essential for biosynthesis of the polyamines spermidine and spermine. Promotes maintenance and self-renewal of embryonic stem cells, by maintaining spermine levels. This is S-adenosylmethionine decarboxylase proenzyme 2 (Amd2) from Mus spretus (Western Mediterranean mouse).